Reading from the N-terminus, the 471-residue chain is Putative multidrug resistance protein MdtD (471 aa).

At 1 to 11 (MTDLPDNTRWQ) the chain is on the periplasmic side. The chain crosses the membrane as a helical span at residues 12–32 (LWIVAFGFFMQSLDTTIVNTA). The Cytoplasmic segment spans residues 33 to 48 (LPSMAQSLGESPLHMH). Residues 49-69 (MVIVSYVLTVAVMLPASGWLA) traverse the membrane as a helical segment. The Periplasmic portion of the chain corresponds to 70-76 (DKVGVRN). A helical membrane pass occupies residues 77–97 (IFFTAIVLFTLGSLFCALSGT). Residues 98-101 (LNEL) lie on the Cytoplasmic side of the membrane. A helical membrane pass occupies residues 102 to 124 (LLARALQGVGGAMMVPVGRLTVM). The Periplasmic segment spans residues 125–137 (KIVPREQYMAAMT). Residues 138–158 (FVTLPGQVGPLLGPALGGLLV) form a helical membrane-spanning segment. Over 159 to 164 (EYASWH) the chain is Cytoplasmic. A helical transmembrane segment spans residues 165-185 (WIFLINIPVGIIGAIATLMLM). The Periplasmic segment spans residues 186-196 (PNYTMQTRRFD). Residues 197–217 (LSGFLLLAIGMAVLTLALDGS) traverse the membrane as a helical segment. Topologically, residues 218–224 (KGTGLSP) are cytoplasmic. The helical transmembrane segment at 225–245 (LAITGLVAVGVVALVLYLLHA) threads the bilayer. Topologically, residues 246-262 (RNNNRALFSLKLFRTRT) are periplasmic. A helical transmembrane segment spans residues 263-283 (FSLGLAGSFAGRIGSGMLPFM). Over 284-285 (TP) the chain is Cytoplasmic. A helical membrane pass occupies residues 286–306 (VFLQIGLGFSPFHAGLMMIPM). Over 307–341 (VLGSMGMKRIVVQVVNRFGYRRVLVATTLGLSLVT) the chain is Periplasmic. A helical transmembrane segment spans residues 342-362 (LLFMTTALLGWYYVLPFVLFL). At 363–395 (QGMVNSTRFSSMNTLTLKDLPDNLASSGNSLLS) the chain is on the cytoplasmic side. The helical transmembrane segment at 396–416 (MIMQLSMSIGVTIAGLLLGLF) threads the bilayer. The Periplasmic segment spans residues 417-430 (GSQHVSVDSGTTQT). Residues 431 to 451 (VFMYTWLSMAFIIALPAFIFA) traverse the membrane as a helical segment. Residues 452-471 (RVPNDTHQNVAISRRKRSAQ) lie on the Cytoplasmic side of the membrane.

This sequence belongs to the major facilitator superfamily. TCR/Tet family.

Its subcellular location is the cell inner membrane. The sequence is that of Putative multidrug resistance protein MdtD from Escherichia coli O17:K52:H18 (strain UMN026 / ExPEC).